Here is a 557-residue protein sequence, read N- to C-terminus: MNIVGQIKEKMKEEIRQAAVRAGLASADELPDVLLEVPRDKAHGDYSTNIAMQLARIAKKPPRAIAEAIVGQLDRERMSVARIEIAGPGFINFYMDNRYLTAVVPAILQAGQAYGESNVGNGEKVQVEFVSANPTGDLHLGHARGAAVGDSLCNILAKAGFDVTREYYINDAGKQIYNLAKSVEARYFQALGVDMPLPEDGYYGDDIVEIGKKLAEEYGDRFVEMEEEERLAFFRDYGLRYELEKIKKDLADFRVPFDVWYSETSLYESGKIDEALSTLRERGYIYEQDGATWFRSTAFGDDKDRVLIKQDGTYTYLLPDIAYHQDKLRRGFKKLINIWGADHHGYIPRMKAAIAALGYDPEALEVEIIQMVNLYQNGERVKMSKRTGKAVTMRELMEEVGVDAVRYFFAMRSGDTHLDFDMDLAVSQSNENPVYYVQYAHARVSSILRQAEEQHISYDGDLALHHLVETEKEIELLKVLGDFPDVVAEAALKRMPHRVTAYAFDLASALHSFYNAEKVLDLDNIEKTKARLALVKAVQITLQNALALIGVSAPEQM.

The 'HIGH' region motif lies at 132 to 142 (ANPTGDLHLGH).

Belongs to the class-I aminoacyl-tRNA synthetase family. In terms of assembly, monomer.

Its subcellular location is the cytoplasm. The enzyme catalyses tRNA(Arg) + L-arginine + ATP = L-arginyl-tRNA(Arg) + AMP + diphosphate. The sequence is that of Arginine--tRNA ligase from Geobacillus kaustophilus (strain HTA426).